We begin with the raw amino-acid sequence, 524 residues long: MDLVKPEEISHPPMDQLQGLEYCIDSNPPWGEAIALGFEHYILALGTAVMIPSILVPMMGGDDGDKVRVVQTLLFLQGVNTLLQTLFGTRLPTVIGGSYAFMVPIISIIHDSSLTRIEDPQLRFLSTMRAVQGAIIVASSVQIILGFSQMWAICSRFFSPIGMVPVIALTGFGLFNRGFPVVGNCVEIGLPMLILFVIFSQYLKNFQFRQFPVVERFALIIALIIVWAYAHVLTASGAYKHRPHQTQLNCRTDMSNLISSAPWIKIPYPLQWGAPSFDAGHAFAMMAAVLVSLIESTGAFKAAARLASATPPPPHVLSRGIGWQGIGILLNGLFGTLSGSSVSVENIGLLGSTRVGSRRVIQISAGFMIFFSMLGKFGALFASIPFTIFAAVYCVLFGLVASVGLSFLQFTNMNSLRNLFIVGVSLFLGLSIPEYFRDFSMKALHGPAHTNAGWFNDFLNTIFLSSPMVALMVAVFLDNTLDYKETARDRGLPWWAKFRTFKGDSRNEEFYTLPFNLNRFFPPS.

The next 12 membrane-spanning stretches (helical) occupy residues tyrosine 41 to glycine 61, valine 69 to threonine 89, leucine 91 to aspartate 111, glycine 133 to isoleucine 153, serine 155 to phenylalanine 175, phenylalanine 179 to phenylalanine 199, phenylalanine 217 to glycine 237, alanine 282 to alanine 302, arginine 359 to alanine 379, leucine 380 to valine 400, leucine 419 to phenylalanine 439, and aspartate 457 to leucine 477.

The protein belongs to the nucleobase:cation symporter-2 (NCS2) (TC 2.A.40) family. Expressed in cotyledons 10 days after imbibition (DAI). Expressed in the minor and major veins of cotyledons and leaves, in the shoot apex and pedicels. Expressed in the root meristems, root tips and lateral root primordia.

It localises to the membrane. This chain is Nucleobase-ascorbate transporter 2 (NAT2), found in Arabidopsis thaliana (Mouse-ear cress).